Reading from the N-terminus, the 779-residue chain is MSRFPAVAGRAPRRQEEGERPVELQEERPSAVRIADREEKGCTSQEGGTTPTFPIQKQRKKLIQAVRDNSFLIVTGNTGSGKTTQLPKYLYEAGFSQHGMIGVTQPRKVAAISVAQRVAEEMKCTLGSKVGYQVRFDDCSSKETAIKYMTDGCLLKHILGDPNLNKFSVIILDEAHERTLTTDILFGLLKKLFQDKSPNRKEHLKVVVMSATMELAKLSAFFGNCPIFDIPGRLYPVREKFCNLIGPRDRENTAYIQAIVKVTMDIHLNEMAGDILVFLTGQFEIEKSCELLFQMAESVDYDYDVQDTTLDGLLILPCYGSMTTDQQRRIFLPPPPGIRKCVISTNISATSLTIDGIRYVVDGGFVKQLNHNPRLGLDILEVVPISKSEALQRSGRAGRTASGKCFRIYSKDFWNQCMPDHVIPEIKRTSLTSVVLTLKCLAIHDVIRFPYLDPPNERLILEALKQLYQCDAIDRSGHVTRLGLSMVEFPLPPHLTCAVIRAASLDCEDLLLPIAAMLSVENVFIRPVDPEYQKEAEQKHRELAAKAGGFNDFATLAVIFEQCKSSGAPASWCQKHWIHWRCLFSAFRVEAQLRELIRKLKQQSDFPRETFEGPKHEVLRRCLCAGYFKNVARRSVGRTFCTMDGRGSPVHIHPSSALHEQETKLEWIIFHEVLVTTKVYARIVCPIRYEWVRDLLPKLHELNAHDLSSVARREMRDDARRKWTNKENVKQLKDGISKEVLKKMQRRNDDKSISDARARFLERKQQRIQDHSDTLKETG.

The tract at residues 1–53 (MSRFPAVAGRAPRRQEEGERPVELQEERPSAVRIADREEKGCTSQEGGTTPTF) is disordered. The segment covering 13–41 (RRQEEGERPVELQEERPSAVRIADREEKG) has biased composition (basic and acidic residues). Over residues 42-53 (CTSQEGGTTPTF) the composition is skewed to polar residues. One can recognise a Helicase ATP-binding domain in the interval 63-231 (IQAVRDNSFL…FGNCPIFDIP (169 aa)). 76–83 (GNTGSGKT) contacts ATP. The DEAH box motif lies at 173-176 (DEAH). The region spanning 263-442 (TMDIHLNEMA…SVVLTLKCLA (180 aa)) is the Helicase C-terminal domain.

It belongs to the DEAD box helicase family. DEAH subfamily.

The enzyme catalyses ATP + H2O = ADP + phosphate + H(+). In terms of biological role, probable ATP-dependent RNA helicase. The polypeptide is Probable ATP-dependent RNA helicase DHX40 (Dhx40) (Rattus norvegicus (Rat)).